The following is a 1205-amino-acid chain: Bromodomain and PHD finger-containing protein 3 (1205 aa).

2 disordered regions span residues M1–P27 and N75–M121. Position 17 is a phosphoserine (S17). Residues N75–P84 show a composition bias toward polar residues. Residues K89 to K99 show a composition bias toward basic residues. A PHD-type 1 zinc finger spans residues D212–S262. A C2HC pre-PHD-type zinc finger spans residues P266–V299. Residues L323 to S387 form a PHD-type 2 zinc finger. Residues S387–P472 are disordered. Residues S400 and S403 each carry the phosphoserine modification. The segment covering D417–E432 has biased composition (acidic residues). The segment covering V444–I456 has biased composition (basic residues). Residues K447, K449, and K671 each carry the N6-acetyllysine modification. The region spanning L589 to A693 is the Bromo domain. A phosphoserine mark is found at S713 and S740. Residues R779–R897 are disordered. Residues L817–R827 show a composition bias toward acidic residues. Residues E839 to E851 are compositionally biased toward low complexity. S900 is subject to Phosphoserine. Disordered regions lie at residues L907–R926 and F931–S1015. The span at R942 to G955 shows a compositional bias: basic and acidic residues. Residues S962 and S965 each carry the phosphoserine modification. The span at S980–Q991 shows a compositional bias: basic and acidic residues. The PWWP domain occupies P1076–E1159.

Component of some HBO1 complex composed of KAT7/HBO1, MEAF6, ING4 or ING5, and BRPF3. Component of the MOZ/MORF complex composed at least of ING5, KAT6A, KAT6B, MEAF6 and one of BRPF1, BRD1/BRPF2 and BRPF3. Interacts with KAT7/HBO1; the interaction is direct.

Its subcellular location is the nucleus. In terms of biological role, scaffold subunit of various histone acetyltransferase (HAT) complexes, such as the MOZ/MORF and HBO1 complexes, which have a histone H3 acetyltransferase activity. Plays a role in DNA replication initiation by directing KAT7/HBO1 specificity towards histone H3 'Lys-14' acetylation (H3K14ac), thereby facilitating the activation of replication origins. Component of the MOZ/MORF complex which has a histone H3 acetyltransferase activity. This chain is Bromodomain and PHD finger-containing protein 3, found in Homo sapiens (Human).